The following is a 220-amino-acid chain: Adenylate kinase (220 aa).

13–18 is an ATP binding site; it reads GAGKGT. Residues 33–62 are NMP; sequence ATGDMLRSQVARQTELGKEAKKIMDQGGLV. AMP contacts are provided by residues Thr-34, Arg-39, 60–62, 89–92, and Gln-96; these read GLV and GFPR. The interval 130 to 167 is LID; it reads GRLVHPGSGRSYHLEFNPPKVPMKDDVTGEPLIQRSDD. Residues Arg-131 and 140–141 contribute to the ATP site; that span reads SY. AMP-binding residues include Arg-164 and Arg-175. Residue Gln-203 participates in ATP binding.

The protein belongs to the adenylate kinase family. AK2 subfamily. Monomer.

It is found in the cytoplasm. The protein resides in the cytosol. The protein localises to the mitochondrion intermembrane space. Its subcellular location is the nucleus. It carries out the reaction AMP + ATP = 2 ADP. Its function is as follows. Catalyzes the reversible transfer of the terminal phosphate group between ATP and AMP. Plays an important role in cellular energy homeostasis and in adenine nucleotide metabolism. Adenylate kinase activity is critical for regulation of the phosphate utilization and the AMP de novo biosynthesis pathways. The protein is Adenylate kinase (adk1) of Schizosaccharomyces pombe (strain 972 / ATCC 24843) (Fission yeast).